A 537-amino-acid chain; its full sequence is CTP synthase (537 aa).

An amidoligase domain region spans residues 1 to 265; sequence MVHFIFVTGG…DNKVLKFFNI (265 aa). Residue Ser13 coordinates CTP. Position 13 (Ser13) interacts with UTP. Residues 14–19 and Asp71 contribute to the ATP site; that span reads SLGKGL. The Mg(2+) site is built by Asp71 and Glu139. Residues 146–148 and Lys222 contribute to the CTP site; that span reads DIE. Lys222 is a binding site for UTP. In terms of domain architecture, Glutamine amidotransferase type-1 spans 290–536; it reads RIAIIAKYHK…IKAAIEYNKC (247 aa). Gly352 contributes to the L-glutamine binding site. Cys379 serves as the catalytic Nucleophile; for glutamine hydrolysis. Residues 380-383, Glu403, and Arg464 each bind L-glutamine; that span reads FGMQ. Active-site residues include His509 and Glu511.

Belongs to the CTP synthase family. As to quaternary structure, homotetramer.

The catalysed reaction is UTP + L-glutamine + ATP + H2O = CTP + L-glutamate + ADP + phosphate + 2 H(+). It catalyses the reaction L-glutamine + H2O = L-glutamate + NH4(+). It carries out the reaction UTP + NH4(+) + ATP = CTP + ADP + phosphate + 2 H(+). Its pathway is pyrimidine metabolism; CTP biosynthesis via de novo pathway; CTP from UDP: step 2/2. With respect to regulation, allosterically activated by GTP, when glutamine is the substrate; GTP has no effect on the reaction when ammonia is the substrate. The allosteric effector GTP functions by stabilizing the protein conformation that binds the tetrahedral intermediate(s) formed during glutamine hydrolysis. Inhibited by the product CTP, via allosteric rather than competitive inhibition. In terms of biological role, catalyzes the ATP-dependent amination of UTP to CTP with either L-glutamine or ammonia as the source of nitrogen. Regulates intracellular CTP levels through interactions with the four ribonucleotide triphosphates. In Rickettsia conorii (strain ATCC VR-613 / Malish 7), this protein is CTP synthase.